The chain runs to 396 residues: DNA repair protein RAD14 (396 aa).

Residues 20-29 (NRKRALERLQ) show a composition bias toward basic and acidic residues. Disordered stretches follow at residues 20-101 (NRKR…EQRQ) and 116-156 (NLKQ…KFQP). Residues 41–62 (PSSTPKSTSTTTTKETGSYSPT) show a composition bias toward low complexity. The span at 63–78 (KTLSQIVNSDSVQVSS) shows a compositional bias: polar residues. Residues 118–127 (KQRENQKDDS) show a composition bias toward basic and acidic residues. The segment covering 128–153 (TTSSKPVDNIRLNQNRPDSVVSSTKK) has biased composition (polar residues). Residues Cys-223, Cys-226, Cys-244, and Cys-247 each coordinate Zn(2+). A zinc finger lies at 223–247 (CRECQSMEVDANLMTNFNVRACRKC).

The protein belongs to the XPA family.

The protein localises to the nucleus. Its function is as follows. Involved in DNA excision repair. The chain is DNA repair protein RAD14 (RAD14) from Candida albicans (strain SC5314 / ATCC MYA-2876) (Yeast).